Consider the following 468-residue polypeptide: Putative FBD-associated F-box protein At5g22720 (468 aa).

Positions 22–68 (EDLISQLPDSLITQILFYLQTKKAVTTSVLSKRWRSLWLSTPGLVLI) constitute an F-box domain. The 59-residue stretch at 375–433 (ELRLSFVPRCLLSSLEFVEIKGCSRSNMERVKYVGEPIETKLARYFVENSTILKKLVLP) folds into the FBD domain.

This chain is Putative FBD-associated F-box protein At5g22720, found in Arabidopsis thaliana (Mouse-ear cress).